A 139-amino-acid polypeptide reads, in one-letter code: Endoribonuclease YbeY (139 aa).

Residues H107, H111, and D117 each coordinate Zn(2+).

This sequence belongs to the endoribonuclease YbeY family. The cofactor is Zn(2+).

The protein localises to the cytoplasm. Functionally, single strand-specific metallo-endoribonuclease involved in late-stage 70S ribosome quality control and in maturation of the 3' terminus of the 16S rRNA. The polypeptide is Endoribonuclease YbeY (Bacteroides fragilis (strain ATCC 25285 / DSM 2151 / CCUG 4856 / JCM 11019 / LMG 10263 / NCTC 9343 / Onslow / VPI 2553 / EN-2)).